A 345-amino-acid polypeptide reads, in one-letter code: Phosphoribosylformylglycinamidine cyclo-ligase (345 aa).

Belongs to the AIR synthase family.

It localises to the cytoplasm. It catalyses the reaction 2-formamido-N(1)-(5-O-phospho-beta-D-ribosyl)acetamidine + ATP = 5-amino-1-(5-phospho-beta-D-ribosyl)imidazole + ADP + phosphate + H(+). Its pathway is purine metabolism; IMP biosynthesis via de novo pathway; 5-amino-1-(5-phospho-D-ribosyl)imidazole from N(2)-formyl-N(1)-(5-phospho-D-ribosyl)glycinamide: step 2/2. The protein is Phosphoribosylformylglycinamidine cyclo-ligase of Shigella dysenteriae serotype 1 (strain Sd197).